A 102-amino-acid chain; its full sequence is Protamine-2 (102 aa).

Positions 1 to 102 (MVRYRVRSPS…RTRRRTCRKH (102 aa)) are disordered. Phosphoserine is present on residues Ser-8, Ser-10, and Ser-37. Residues 39–48 (EHVEVYERTH) show a composition bias toward basic and acidic residues. Basic residues predominate over residues 49–102 (GHSHYRRRHCSRRRLRRIHRQQHRSCRRRKRRSCRHRRRHRRGCRTRRRTCRKH).

Belongs to the protamine P2 family. As to quaternary structure, interacts with TDRP. Post-translationally, proteolytic processing into mature chains is required for histone eviction during spermatogenesis. Transition proteins (TNP1 and TNP2) are required for processing. In terms of tissue distribution, testis.

Its subcellular location is the nucleus. The protein localises to the chromosome. In terms of biological role, protamines substitute for histones in the chromatin of sperm during the haploid phase of spermatogenesis. They compact sperm DNA into a highly condensed, stable and inactive complex. The protein is Protamine-2 (PRM2) of Pan paniscus (Pygmy chimpanzee).